A 202-amino-acid chain; its full sequence is Peptidyl-tRNA hydrolase (202 aa).

Y17 contributes to the tRNA binding site. The Proton acceptor role is filled by H22. Positions 76, 78, and 124 each coordinate tRNA.

It belongs to the PTH family. In terms of assembly, monomer.

The protein resides in the cytoplasm. The catalysed reaction is an N-acyl-L-alpha-aminoacyl-tRNA + H2O = an N-acyl-L-amino acid + a tRNA + H(+). Functionally, hydrolyzes ribosome-free peptidyl-tRNAs (with 1 or more amino acids incorporated), which drop off the ribosome during protein synthesis, or as a result of ribosome stalling. Its function is as follows. Catalyzes the release of premature peptidyl moieties from peptidyl-tRNA molecules trapped in stalled 50S ribosomal subunits, and thus maintains levels of free tRNAs and 50S ribosomes. The chain is Peptidyl-tRNA hydrolase from Nitratidesulfovibrio vulgaris (strain DSM 19637 / Miyazaki F) (Desulfovibrio vulgaris).